Reading from the N-terminus, the 119-residue chain is Large ribosomal subunit protein bL20 (119 aa).

It belongs to the bacterial ribosomal protein bL20 family.

Functionally, binds directly to 23S ribosomal RNA and is necessary for the in vitro assembly process of the 50S ribosomal subunit. It is not involved in the protein synthesizing functions of that subunit. This chain is Large ribosomal subunit protein bL20, found in Vesicomyosocius okutanii subsp. Calyptogena okutanii (strain HA).